The primary structure comprises 257 residues: Imidazole glycerol phosphate synthase subunit HisF (257 aa).

Residues Asp12 and Asp131 contribute to the active site.

The protein belongs to the HisA/HisF family. In terms of assembly, heterodimer of HisH and HisF.

It is found in the cytoplasm. It carries out the reaction 5-[(5-phospho-1-deoxy-D-ribulos-1-ylimino)methylamino]-1-(5-phospho-beta-D-ribosyl)imidazole-4-carboxamide + L-glutamine = D-erythro-1-(imidazol-4-yl)glycerol 3-phosphate + 5-amino-1-(5-phospho-beta-D-ribosyl)imidazole-4-carboxamide + L-glutamate + H(+). The protein operates within amino-acid biosynthesis; L-histidine biosynthesis; L-histidine from 5-phospho-alpha-D-ribose 1-diphosphate: step 5/9. IGPS catalyzes the conversion of PRFAR and glutamine to IGP, AICAR and glutamate. The HisF subunit catalyzes the cyclization activity that produces IGP and AICAR from PRFAR using the ammonia provided by the HisH subunit. The polypeptide is Imidazole glycerol phosphate synthase subunit HisF (Burkholderia lata (strain ATCC 17760 / DSM 23089 / LMG 22485 / NCIMB 9086 / R18194 / 383)).